A 119-amino-acid polypeptide reads, in one-letter code: Holo-[acyl-carrier-protein] synthase (119 aa).

The Mg(2+) site is built by aspartate 8 and glutamate 58.

It belongs to the P-Pant transferase superfamily. AcpS family. Mg(2+) is required as a cofactor.

It localises to the cytoplasm. It carries out the reaction apo-[ACP] + CoA = holo-[ACP] + adenosine 3',5'-bisphosphate + H(+). Functionally, transfers the 4'-phosphopantetheine moiety from coenzyme A to a Ser of acyl-carrier-protein. In Bacillus mycoides (strain KBAB4) (Bacillus weihenstephanensis), this protein is Holo-[acyl-carrier-protein] synthase.